Consider the following 253-residue polypeptide: Coenzyme F420:L-glutamate ligase (253 aa).

Residues 9–12, 38–39, and Lys-43 each bind GTP; these read LPEI and ST. Asp-113 serves as a coordination point for a divalent metal cation. Position 116 (Asn-116) interacts with GTP. A divalent metal cation contacts are provided by Asp-150, Thr-151, and Glu-208. 206–213 contacts GTP; that stretch reads SGEGDDGT.

This sequence belongs to the CofE family. Homodimer. The cofactor is Mg(2+). Mn(2+) is required as a cofactor. It depends on K(+) as a cofactor.

It carries out the reaction oxidized coenzyme F420-0 + GTP + L-glutamate = oxidized coenzyme F420-1 + GDP + phosphate + H(+). The catalysed reaction is oxidized coenzyme F420-1 + GTP + L-glutamate = oxidized coenzyme F420-2 + GDP + phosphate + H(+). The protein operates within cofactor biosynthesis; coenzyme F420 biosynthesis. Its function is as follows. Catalyzes the GTP-dependent successive addition of two or more gamma-linked L-glutamates to the L-lactyl phosphodiester of 7,8-didemethyl-8-hydroxy-5-deazariboflavin (F420-0) to form coenzyme F420-0-glutamyl-glutamate (F420-2) or polyglutamated F420 derivatives. The polypeptide is Coenzyme F420:L-glutamate ligase (Halobacterium salinarum (strain ATCC 29341 / DSM 671 / R1)).